The primary structure comprises 1123 residues: Phytochrome A (1123 aa).

Residues 1 to 14 (MSSSRPSQSSTTSS) are compositionally biased toward low complexity. A disordered region spans residues 1-20 (MSSSRPSQSSTTSSRSKHSA). Positions 218-401 (SMERLCDTMV…VFAILVNKEL (184 aa)) constitute a GAF domain. Cysteine 323 is a binding site for phytochromobilin. The region spanning 617–687 (VTAEMVRLIE…KMLELALQGQ (71 aa)) is the PAS 1 domain. Residues 690–746 (RNVEFEIKTHGPSRDSSPISLIVNACASKDVRDSVVGVCFIAQDITGQKSIMDKFTR) form the PAC domain. One can recognise a PAS 2 domain in the interval 747-821 (IEGDYRAIIQ…KNQEAFVNFG (75 aa)). The region spanning 901–1118 (YIRRQIRNPL…TFIISVELAV (218 aa)) is the Histidine kinase domain.

Belongs to the phytochrome family. In terms of assembly, homodimer. Post-translationally, contains one covalently linked phytochromobilin chromophore.

In terms of biological role, regulatory photoreceptor which exists in two forms that are reversibly interconvertible by light: the Pr form that absorbs maximally in the red region of the spectrum and the Pfr form that absorbs maximally in the far-red region. Photoconversion of Pr to Pfr induces an array of morphogenic responses, whereas reconversion of Pfr to Pr cancels the induction of those responses. Pfr controls the expression of a number of nuclear genes including those encoding the small subunit of ribulose-bisphosphate carboxylase, chlorophyll A/B binding protein, protochlorophyllide reductase, rRNA, etc. It also controls the expression of its own gene(s) in a negative feedback fashion. The sequence is that of Phytochrome A (PHYA) from Solanum tuberosum (Potato).